The sequence spans 355 residues: Holliday junction branch migration complex subunit RuvB (355 aa).

The segment at 4–190 (TDKLAAERII…FGIVARLEFY (187 aa)) is large ATPase domain (RuvB-L). Residues Leu29, Arg30, Gly71, Lys74, Thr75, Thr76, 137 to 139 (EDY), Arg180, Tyr190, and Arg227 contribute to the ATP site. Residue Thr75 participates in Mg(2+) binding. The small ATPAse domain (RuvB-S) stretch occupies residues 191–261 (DADQLARIVR…VADAALAMLD (71 aa)). The interval 264 to 355 (PVGFDLMDRK…RGMWDTPAGK (92 aa)) is head domain (RuvB-H). Arg300, Arg319, and Arg324 together coordinate DNA.

Belongs to the RuvB family. Homohexamer. Forms an RuvA(8)-RuvB(12)-Holliday junction (HJ) complex. HJ DNA is sandwiched between 2 RuvA tetramers; dsDNA enters through RuvA and exits via RuvB. An RuvB hexamer assembles on each DNA strand where it exits the tetramer. Each RuvB hexamer is contacted by two RuvA subunits (via domain III) on 2 adjacent RuvB subunits; this complex drives branch migration. In the full resolvosome a probable DNA-RuvA(4)-RuvB(12)-RuvC(2) complex forms which resolves the HJ.

Its subcellular location is the cytoplasm. The enzyme catalyses ATP + H2O = ADP + phosphate + H(+). Functionally, the RuvA-RuvB-RuvC complex processes Holliday junction (HJ) DNA during genetic recombination and DNA repair, while the RuvA-RuvB complex plays an important role in the rescue of blocked DNA replication forks via replication fork reversal (RFR). RuvA specifically binds to HJ cruciform DNA, conferring on it an open structure. The RuvB hexamer acts as an ATP-dependent pump, pulling dsDNA into and through the RuvAB complex. RuvB forms 2 homohexamers on either side of HJ DNA bound by 1 or 2 RuvA tetramers; 4 subunits per hexamer contact DNA at a time. Coordinated motions by a converter formed by DNA-disengaged RuvB subunits stimulates ATP hydrolysis and nucleotide exchange. Immobilization of the converter enables RuvB to convert the ATP-contained energy into a lever motion, pulling 2 nucleotides of DNA out of the RuvA tetramer per ATP hydrolyzed, thus driving DNA branch migration. The RuvB motors rotate together with the DNA substrate, which together with the progressing nucleotide cycle form the mechanistic basis for DNA recombination by continuous HJ branch migration. Branch migration allows RuvC to scan DNA until it finds its consensus sequence, where it cleaves and resolves cruciform DNA. The protein is Holliday junction branch migration complex subunit RuvB of Burkholderia ambifaria (strain ATCC BAA-244 / DSM 16087 / CCUG 44356 / LMG 19182 / AMMD) (Burkholderia cepacia (strain AMMD)).